Consider the following 189-residue polypeptide: Homeobox protein HD-2 (189 aa).

Positions 119–181 form a DNA-binding region, homeobox; TALE-type; the sequence is KPRTRANFPM…NARRRILPFM (63 aa).

Belongs to the TALE/KNOX homeobox family.

The protein resides in the nucleus. This Encephalitozoon cuniculi (strain GB-M1) (Microsporidian parasite) protein is Homeobox protein HD-2 (HD-2).